Consider the following 643-residue polypeptide: Phosphomethylpyrimidine synthase (643 aa).

Residues Asn248, Met277, Tyr306, His342, 362 to 364, 403 to 406, and Glu442 contribute to the substrate site; these read SRG and DGLR. His446 contributes to the Zn(2+) binding site. Tyr469 is a binding site for substrate. His510 serves as a coordination point for Zn(2+). [4Fe-4S] cluster is bound by residues Cys590, Cys593, and Cys598.

The protein belongs to the ThiC family. In terms of assembly, homodimer. The cofactor is [4Fe-4S] cluster.

The enzyme catalyses 5-amino-1-(5-phospho-beta-D-ribosyl)imidazole + S-adenosyl-L-methionine = 4-amino-2-methyl-5-(phosphooxymethyl)pyrimidine + CO + 5'-deoxyadenosine + formate + L-methionine + 3 H(+). The protein operates within cofactor biosynthesis; thiamine diphosphate biosynthesis. Catalyzes the synthesis of the hydroxymethylpyrimidine phosphate (HMP-P) moiety of thiamine from aminoimidazole ribotide (AIR) in a radical S-adenosyl-L-methionine (SAM)-dependent reaction. This is Phosphomethylpyrimidine synthase from Paraburkholderia phytofirmans (strain DSM 17436 / LMG 22146 / PsJN) (Burkholderia phytofirmans).